The chain runs to 810 residues: Volume-regulated anion channel subunit LRRC8A (810 aa).

N-acetylmethionine is present on methionine 1. Residues methionine 1 to proline 22 lie on the Cytoplasmic side of the membrane. Residues tryptophan 23 to valine 47 traverse the membrane as a helical segment. At threonine 48–lysine 123 the chain is on the extracellular side. 3 cysteine pairs are disulfide-bonded: cysteine 54-cysteine 310, cysteine 57-cysteine 65, and cysteine 113-cysteine 295. 2 N-linked (GlcNAc...) asparagine glycosylation sites follow: asparagine 66 and asparagine 83. A helical membrane pass occupies residues tyrosine 124–phenylalanine 142. Residues tryptophan 143–tyrosine 264 lie on the Cytoplasmic side of the membrane. Threonine 200 is subject to Phosphothreonine. Serine 202 carries the phosphoserine modification. Position 215 is a phosphothreonine (threonine 215). Serine 217 carries the phosphoserine modification. Residues methionine 265 to valine 286 traverse the membrane as a helical segment. Over histidine 287–threonine 316 the chain is Extracellular. The helical transmembrane segment at leucine 317–tryptophan 341 threads the bilayer. At tryptophan 342–alanine 810 the chain is on the cytoplasmic side. LRR repeat units follow at residues tryptophan 411–lysine 422, asparagine 423–leucine 445, glutamate 447–leucine 468, threonine 469–arginine 492, glutamate 493–leucine 515, leucine 518–glutamate 542, leucine 543–valine 565, valine 567–lysine 589, methionine 590–leucine 613, histidine 614–histidine 637, histidine 639–leucine 661, threonine 662–cysteine 684, lysine 686–leucine 707, glutamine 708–cysteine 730, lysine 732–leucine 753, threonine 754–cysteine 776, and leucine 778–arginine 801. Positions leucine 706 to leucine 707 match the Di-leucine motif motif.

The protein belongs to the LRRC8 family. In terms of assembly, heterohexamer; oligomerizes with other LRRC8 proteins (LRRC8B, LRRC8C, LRRC8D and/or LRRC8E) to form a heterohexamer. Can form homohexamers in vitro, but these have lower conductance than heterohexamers. In vivo, the subunit composition may depend primarily on expression levels, and heterooligomeric channels containing various proportions of the different LRRC8 proteins may coexist. Interact with GRB2. Interacts with NOX4; this interaction prevents the ubiquitin-mediated degradation of LRRC8A. Post-translationally, N-glycosylated. As to expression, ubiquitously expressed. High levels detected in the bone marrow; lower levels found in peripheral blood cells. Highly expressed in pancreatic beta cells.

The protein localises to the cell membrane. It is found in the lysosome membrane. It carries out the reaction chloride(in) = chloride(out). The catalysed reaction is iodide(out) = iodide(in). It catalyses the reaction taurine(out) = taurine(in). The enzyme catalyses L-aspartate(out) = L-aspartate(in). It carries out the reaction L-glutamate(out) = L-glutamate(in). The catalysed reaction is myo-inositol(out) = myo-inositol(in). It catalyses the reaction 2',3'-cGAMP(out) = 2',3'-cGAMP(in). Its activity is regulated as follows. Inhibited by (4-[(2-butyl-6,7-dichloro-2-cyclopentyl-2,3-dihydro-1-oxo-1H-inden-5-yl)oxy]butanoic acid), which plugs the channel like a cork in a bottle by binding in the extracellular selectivity filter and sterically occluding ion conduction. Lipids may block conduction in closed heterohexameric channels. Functionally, essential component of the volume-regulated anion channel (VRAC, also named VSOAC channel), an anion channel required to maintain a constant cell volume in response to extracellular or intracellular osmotic changes. The VRAC channel conducts iodide better than chloride and can also conduct organic osmolytes like taurine. Mediates efflux of amino acids, such as aspartate and glutamate, in response to osmotic stress. In complex with LRRC8C or LRRC8E, acts as a transporter of immunoreactive cyclic dinucleotide GMP-AMP (2'-3'-cGAMP), an immune messenger produced in response to DNA virus in the cytosol: mediates both import and export of 2'-3'-cGAMP, thereby promoting transfer of 2'-3'-cGAMP to bystander cells. In contrast, complexes containing LRRC8D inhibit transport of 2'-3'-cGAMP. Required for in vivo channel activity, together with at least one other family member (LRRC8B, LRRC8C, LRRC8D or LRRC8E); channel characteristics depend on the precise subunit composition. Can form functional channels by itself (in vitro). Involved in B-cell development: required for the pro-B cell to pre-B cell transition. Also required for T-cell development. Required for myoblast differentiation: VRAC activity promotes membrane hyperpolarization and regulates insulin-stimulated glucose metabolism and oxygen consumption. Also acts as a regulator of glucose-sensing in pancreatic beta cells: VRAC currents, generated in response to hypotonicity- or glucose-induced beta cell swelling, depolarize cells, thereby causing electrical excitation, leading to increase glucose sensitivity and insulin secretion. Also plays a role in lysosome homeostasis by forming functional lysosomal VRAC channels in response to low cytoplasmic ionic strength condition: lysosomal VRAC channels are necessary for the formation of large lysosome-derived vacuoles, which store and then expel excess water to maintain cytosolic water homeostasis. Acts as a key factor in NLRP3 inflammasome activation by modulating itaconate efflux and mitochondria function. The polypeptide is Volume-regulated anion channel subunit LRRC8A (Mus musculus (Mouse)).